Consider the following 90-residue polypeptide: DNA-directed RNA polymerase subunit omega (90 aa).

Residues 70 to 90 (QEQQEQEAAELAAVSSIMHNR) are disordered.

It belongs to the RNA polymerase subunit omega family. The RNAP catalytic core consists of 2 alpha, 1 beta, 1 beta' and 1 omega subunit. When a sigma factor is associated with the core the holoenzyme is formed, which can initiate transcription.

It carries out the reaction RNA(n) + a ribonucleoside 5'-triphosphate = RNA(n+1) + diphosphate. Promotes RNA polymerase assembly. Latches the N- and C-terminal regions of the beta' subunit thereby facilitating its interaction with the beta and alpha subunits. In Vibrio cholerae serotype O1 (strain ATCC 39541 / Classical Ogawa 395 / O395), this protein is DNA-directed RNA polymerase subunit omega.